The primary structure comprises 307 residues: Ribonuclease Z (307 aa).

The Zn(2+) site is built by His-63, His-65, Asp-67, His-68, His-141, Asp-212, and His-270. The active-site Proton acceptor is the Asp-67.

It belongs to the RNase Z family. As to quaternary structure, homodimer. Zn(2+) serves as cofactor.

It catalyses the reaction Endonucleolytic cleavage of RNA, removing extra 3' nucleotides from tRNA precursor, generating 3' termini of tRNAs. A 3'-hydroxy group is left at the tRNA terminus and a 5'-phosphoryl group is left at the trailer molecule.. In terms of biological role, zinc phosphodiesterase, which displays some tRNA 3'-processing endonuclease activity. Probably involved in tRNA maturation, by removing a 3'-trailer from precursor tRNA. In Bacillus thuringiensis subsp. konkukian (strain 97-27), this protein is Ribonuclease Z.